Reading from the N-terminus, the 385-residue chain is Nod factor hydrolase protein 1 (385 aa).

The signal sequence occupies residues 1–21 (MANFLKLKQFLTLVLILLALA). In terms of domain architecture, GH18 spans 36-385 (RVKGIYWIEN…TASKAWRPES (350 aa)). N-linked (GlcNAc...) asparagine glycosylation is found at Asn-115 and Asn-134. The active-site Proton donor is the Glu-153. N-linked (GlcNAc...) asparagine glycosylation is found at Asn-233 and Asn-247.

It belongs to the glycosyl hydrolase 18 family. Chitinase class V subfamily.

In terms of biological role, symbiotic enzyme that hydrolytically inactivates Nod factors (NFs) with a C16:2 acyl chain produced by the microsymbiont Sinorhizobium meliloti. NFs are lipo-chitooligosaccharide signaling molecules produced by nitrogen-fixing rhizobia to initiate nodulation (symbiosis) on the roots of legumes. Controls NF hydrolysis at the stage of root hair infection. Involved in the regulation of growth and branching of mature nodules. Modulates NF levels and signaling to complete transition of infected nodules to functional nitrogen-fixing organs. Lacks chitinase activity in vitro toward glycol chitin, carboxymethyl-chitin, colloidal chitin, and the chitin oligosaccharides (N-acetylglucosamine) (GlcNAc)6 and (GlcNAc)5. The sequence is that of Nod factor hydrolase protein 1 from Medicago truncatula (Barrel medic).